Reading from the N-terminus, the 974-residue chain is Alpha-1,4 glucan phosphorylase L-2 isozyme, chloroplastic/amyloplastic (974 aa).

Residues 1–81 (MATFAVSGLN…LDVFQPDSTS (81 aa)) constitute a chloroplast transit peptide. The interval 509–551 (ADVEKAADEEQEEEGKDDSKDEETEAVKAETTNEEEETEVKKV) is disordered. Residues 517-532 (EEQEEEGKDDSKDEET) are compositionally biased toward acidic residues. Lysine 820 bears the N6-(pyridoxal phosphate)lysine mark.

This sequence belongs to the glycogen phosphorylase family. It depends on pyridoxal 5'-phosphate as a cofactor. As to expression, leaves.

It localises to the plastid. The protein localises to the chloroplast. The protein resides in the amyloplast. The catalysed reaction is [(1-&gt;4)-alpha-D-glucosyl](n) + phosphate = [(1-&gt;4)-alpha-D-glucosyl](n-1) + alpha-D-glucose 1-phosphate. In terms of biological role, phosphorylase is an important allosteric enzyme in carbohydrate metabolism. Enzymes from different sources differ in their regulatory mechanisms and in their natural substrates. However, all known phosphorylases share catalytic and structural properties. The protein is Alpha-1,4 glucan phosphorylase L-2 isozyme, chloroplastic/amyloplastic (STP-1) of Solanum tuberosum (Potato).